Reading from the N-terminus, the 585-residue chain is Protein FAM13C (585 aa).

Disordered regions lie at residues 26 to 45 (PVSL…ENNK), 83 to 138 (SMGN…NAFK), and 171 to 216 (EAAQ…APED). Basic and acidic residues-rich tracts occupy residues 27 to 45 (VSLH…ENNK) and 99 to 112 (ESGR…ETEH). The residue at position 131 (Ser131) is a Phosphoserine. Ser238 is modified (phosphoserine). Disordered regions lie at residues 250-282 (FNLD…DGKE), 349-391 (EEQG…EETP), and 441-477 (IPTI…DHLT). Residues 262–275 (STQQFMMPRSSSRC) show a composition bias toward polar residues. Ser385 and Ser386 each carry phosphoserine.

The protein belongs to the FAM13 family.

The protein is Protein FAM13C (FAM13C) of Homo sapiens (Human).